A 250-amino-acid chain; its full sequence is tRNA pseudouridine synthase A (250 aa).

D52 serves as the catalytic Nucleophile. Substrate is bound at residue Y111.

The protein belongs to the tRNA pseudouridine synthase TruA family. As to quaternary structure, homodimer.

The catalysed reaction is uridine(38/39/40) in tRNA = pseudouridine(38/39/40) in tRNA. Functionally, formation of pseudouridine at positions 38, 39 and 40 in the anticodon stem and loop of transfer RNAs. This Methylorubrum extorquens (strain CM4 / NCIMB 13688) (Methylobacterium extorquens) protein is tRNA pseudouridine synthase A.